An 815-amino-acid chain; its full sequence is uncharacterized protein (815 aa).

An N-terminal signal peptide occupies residues Met1–Ala25. 6 helical membrane-spanning segments follow: residues Phe127–Gly147, Ile157–Met177, Ser311–Phe331, Phe333–Ala353, Val372–Ile392, and Gly401–His421. The disordered stretch occupies residues Lys483–Arg815. The span at His513 to Ser543 shows a compositional bias: polar residues. 2 stretches are compositionally biased toward basic and acidic residues: residues Lys544 to Gln563 and Gln599 to Val614. Residues Lys619–Ala630 are compositionally biased toward polar residues. Residues Glu648 to Gln658 are compositionally biased toward basic and acidic residues. The segment covering Glu665–Phe678 has biased composition (polar residues). Residues Lys696–Gln705 are compositionally biased toward basic and acidic residues. Residues Ser720 to Ala732 are compositionally biased toward polar residues. Positions Asn734–Gln757 are enriched in basic and acidic residues. Residues Pro773–Leu793 are compositionally biased toward polar residues. Basic and acidic residues predominate over residues Ile796–Arg815.

Its subcellular location is the cell membrane. This is an uncharacterized protein from Bacillus subtilis (strain 168).